The sequence spans 319 residues: tRNA uridine(34) hydroxylase (319 aa).

The 99-residue stretch at 133–231 (EDPNSVVIDT…YLEDVSSENS (99 aa)) folds into the Rhodanese domain. Cys-191 serves as the catalytic Cysteine persulfide intermediate.

Belongs to the TrhO family.

The enzyme catalyses uridine(34) in tRNA + AH2 + O2 = 5-hydroxyuridine(34) in tRNA + A + H2O. Functionally, catalyzes oxygen-dependent 5-hydroxyuridine (ho5U) modification at position 34 in tRNAs. The polypeptide is tRNA uridine(34) hydroxylase (Prochlorococcus marinus (strain NATL2A)).